The chain runs to 244 residues: Octanoyltransferase (244 aa).

A BPL/LPL catalytic domain is found at 49 to 237 (VAPGNFLIFC…HLTALFELHI (189 aa)). Residues 94 to 101 (RGGDITYH), 167 to 169 (AMG), and 180 to 182 (GFA) contribute to the substrate site. Residue Cys-198 is the Acyl-thioester intermediate of the active site.

This sequence belongs to the LipB family.

It localises to the cytoplasm. The enzyme catalyses octanoyl-[ACP] + L-lysyl-[protein] = N(6)-octanoyl-L-lysyl-[protein] + holo-[ACP] + H(+). Its pathway is protein modification; protein lipoylation via endogenous pathway; protein N(6)-(lipoyl)lysine from octanoyl-[acyl-carrier-protein]: step 1/2. Its function is as follows. Catalyzes the transfer of endogenously produced octanoic acid from octanoyl-acyl-carrier-protein onto the lipoyl domains of lipoate-dependent enzymes. Lipoyl-ACP can also act as a substrate although octanoyl-ACP is likely to be the physiological substrate. This is Octanoyltransferase from Cytophaga hutchinsonii (strain ATCC 33406 / DSM 1761 / CIP 103989 / NBRC 15051 / NCIMB 9469 / D465).